Reading from the N-terminus, the 675-residue chain is Potassium-transporting ATPase ATP-binding subunit 2 (675 aa).

4 helical membrane-spanning segments follow: residues Ile-34–Ile-54, Leu-65–Phe-85, Ile-216–Leu-236, and Leu-245–Gly-265. Asp-304 serves as the catalytic 4-aspartylphosphate intermediate. Residues Asp-341, Glu-345, Phe-372–Ser-379, and Lys-390 contribute to the ATP site. Residues Asp-513 and Asp-517 each coordinate Mg(2+). The next 3 membrane-spanning stretches (helical) occupy residues Ala-569–Met-591, Ala-611–Met-631, and Ile-644–Ile-664.

It belongs to the cation transport ATPase (P-type) (TC 3.A.3) family. Type IA subfamily. As to quaternary structure, the system is composed of three essential subunits: KdpA, KdpB and KdpC.

It localises to the cell membrane. The enzyme catalyses K(+)(out) + ATP + H2O = K(+)(in) + ADP + phosphate + H(+). Its function is as follows. Part of the high-affinity ATP-driven potassium transport (or Kdp) system, which catalyzes the hydrolysis of ATP coupled with the electrogenic transport of potassium into the cytoplasm. This subunit is responsible for energy coupling to the transport system and for the release of the potassium ions to the cytoplasm. In Staphylococcus aureus (strain Mu50 / ATCC 700699), this protein is Potassium-transporting ATPase ATP-binding subunit 2.